We begin with the raw amino-acid sequence, 142 residues long: Putative pre-16S rRNA nuclease (142 aa).

Belongs to the YqgF nuclease family.

The protein localises to the cytoplasm. Could be a nuclease involved in processing of the 5'-end of pre-16S rRNA. This chain is Putative pre-16S rRNA nuclease, found in Azotobacter vinelandii (strain DJ / ATCC BAA-1303).